The sequence spans 278 residues: Elongation factor Ts (278 aa).

The interval 80 to 83 (TDFV) is involved in Mg(2+) ion dislocation from EF-Tu.

This sequence belongs to the EF-Ts family.

It localises to the cytoplasm. Functionally, associates with the EF-Tu.GDP complex and induces the exchange of GDP to GTP. It remains bound to the aminoacyl-tRNA.EF-Tu.GTP complex up to the GTP hydrolysis stage on the ribosome. The polypeptide is Elongation factor Ts (Renibacterium salmoninarum (strain ATCC 33209 / DSM 20767 / JCM 11484 / NBRC 15589 / NCIMB 2235)).